We begin with the raw amino-acid sequence, 338 residues long: Peptidoglycan deacetylase-like protein FGM2 (338 aa).

Zn(2+) is bound by residues aspartate 49, histidine 124, and histidine 128. A NodB homology domain is found at 65–257 (LSDYSAGIFA…VTNSHGFVSS (193 aa)).

The protein belongs to the polysaccharide deacetylase family.

Functionally, peptidoglycan deacetylase-like protein; part of the Fg3_54/C64 gene cluster that mediates the biosynthesis of the octapeptide fusaoctaxin A, a virulence factor that is required for cell-to-cell invasiveness of plant host. The 2 nonribosomal peptide synthetases NRPS9 and NRPS5 form an assembly line which likely utilizes GABA as a starter unit (loaded on the unique module M1 of NRPS9) and sequentially incorporates seven extender units composed of the residues L-Ala, L-allo-Ile, L-Ser, L-Val, L-Ser, L-Leu and L-Leu, respectively. During the process, each of the residues that are tethered on modules M3-M7 of NRPS5 containing an E domain can undergo an epimerization reaction to produce a D-configuration before the transpeptidation reaction occurs. The elongation of the peptidyl chain might be terminated by module M8-mediated L-Leu incorporation, followed by R domain-catalyzed 4 electron reduction to release the resulting octapeptide from the assembly line as an alcohol. Fusaoctaxin A is cleaved by the cluster specific ABC transporter FGM5 to the pentapeptide fusapentaxin A and the tripeptide fusatrixin A. The other enzymes from the cluster, FGM1, FGM2, FGM3 and FGM9 seem not to be involved in the biosynthesis of fusaoctaxin A and their functions have still to be determined. This Gibberella zeae (strain ATCC MYA-4620 / CBS 123657 / FGSC 9075 / NRRL 31084 / PH-1) (Wheat head blight fungus) protein is Peptidoglycan deacetylase-like protein FGM2.